Consider the following 84-residue polypeptide: RNA-binding protein Hfq (84 aa).

One can recognise a Sm domain in the interval 10–69 (DPFLNILRKERIPVSIYLVNGIKLQGQIDSFDQYVVLLKNSVTQMVYKHAISTIVPAKAI).

This sequence belongs to the Hfq family. In terms of assembly, homohexamer.

RNA chaperone that binds small regulatory RNA (sRNAs) and mRNAs to facilitate mRNA translational regulation in response to envelope stress, environmental stress and changes in metabolite concentrations. Also binds with high specificity to tRNAs. The sequence is that of RNA-binding protein Hfq from Nitrosomonas europaea (strain ATCC 19718 / CIP 103999 / KCTC 2705 / NBRC 14298).